The sequence spans 243 residues: L-fucose operon activator (243 aa).

The HTH deoR-type domain occupies 1 to 57 (MKAARQQAIVDLLLNHTSLTTEALSEQLKVSKETIRRDLNELQTQGKILRNHGRAKY). Residues 19–38 (LTTEALSEQLKVSKETIRRD) constitute a DNA-binding region (H-T-H motif).

Its function is as follows. Transcriptional activator of the fuc operon. This is L-fucose operon activator (fucR) from Escherichia coli (strain K12).